The following is a 451-amino-acid chain: MNTRVLTGITTTGTPHLGNYAGAIRPAIQASTQPGVDAFFFLADYHALIKCDDPARVARSRLELAATWLAAGLDPERVTFYRQSDIPEITELCWLLTCVTPKGLMNRAHAYKASVDQNAAKGVEPDDGVTMGLFSYPVLMAADILLFNANQVPVGRDQVQHLEMARDIAQRFNHLYGREFFVLPEVVIAEEVATLPGLDGRKMSKSYNNTIPLFEGGAAGLRNATQRIVTDSRLPGEPKDAEASHLYMLYRAFSTQQESMAFRRQLEEGMGWGDAKQALYERLERDLAPMRERYVELISNPGLIEDILQAGAAKARKLAQPLVRTLRDAVGLGALQPAAAKAAQPARKAAKDARFVSFRDEDGSFRFRLLAADGEELLCSVPFANPKEAGALMRRLQDEAPEQALRGHDDVSYAAWLDGKEVAYGPQAADAGARDALLAKAREALAQLAAA.

ATP contacts are provided by residues 10–12 (TTT) and 18–19 (GN). The 'HIGH' region signature appears at 11-19 (TTGTPHLGN). Asp-143 is a binding site for L-tryptophan. ATP-binding positions include 155 to 157 (GRD), Leu-195, and 202 to 206 (KMSKS). Positions 202–206 (KMSKS) match the 'KMSKS' region motif.

It belongs to the class-I aminoacyl-tRNA synthetase family. In terms of assembly, homodimer.

The protein localises to the cytoplasm. The enzyme catalyses tRNA(Trp) + L-tryptophan + ATP = L-tryptophyl-tRNA(Trp) + AMP + diphosphate + H(+). Its function is as follows. Catalyzes the attachment of tryptophan to tRNA(Trp). The chain is Tryptophan--tRNA ligase from Bordetella bronchiseptica (strain ATCC BAA-588 / NCTC 13252 / RB50) (Alcaligenes bronchisepticus).